Reading from the N-terminus, the 186-residue chain is Peptidyl-tRNA hydrolase (186 aa).

Residue Tyr-14 participates in tRNA binding. His-19 (proton acceptor) is an active-site residue. The tRNA site is built by Tyr-61, Asn-63, and Asn-107.

It belongs to the PTH family. Monomer.

The protein localises to the cytoplasm. It carries out the reaction an N-acyl-L-alpha-aminoacyl-tRNA + H2O = an N-acyl-L-amino acid + a tRNA + H(+). Its function is as follows. Hydrolyzes ribosome-free peptidyl-tRNAs (with 1 or more amino acids incorporated), which drop off the ribosome during protein synthesis, or as a result of ribosome stalling. Functionally, catalyzes the release of premature peptidyl moieties from peptidyl-tRNA molecules trapped in stalled 50S ribosomal subunits, and thus maintains levels of free tRNAs and 50S ribosomes. This chain is Peptidyl-tRNA hydrolase, found in Helicobacter pylori (strain Shi470).